The chain runs to 100 residues: Cystatin-B (100 aa).

One can recognise a Cystatin domain in the interval 6 to 88; sequence GGISAPLDAD…GGGLELSGMQ (83 aa). The Secondary area of contact motif lies at 48–52; sequence QIVSG.

It belongs to the cystatin family. Widely expressed. Highly expressed in liver and to a lesser extent in spleen, gill, brain, intestine, kidney, head kidney and blood. Lowest level in muscle.

The protein resides in the cytoplasm. Thiol protease inhibitor. Has papain inhibitory activity in vitro. May be involved in immune responses against invading Gram-negative bacteria. This Oplegnathus fasciatus (Barred knifejaw) protein is Cystatin-B.